The primary structure comprises 65 residues: Protein translocase subunit SecE (65 aa).

The Cytoplasmic portion of the chain corresponds to 1–27 (MEKLKEFLKGVRDELKRVVWPSRELVV). The helical transmembrane segment at 28–59 (KATISVIIFSLAIGVYLWILDLTFTKIISFIL) threads the bilayer. Residues 60–65 (SLRGSL) lie on the Periplasmic side of the membrane.

The protein belongs to the SecE/SEC61-gamma family. As to quaternary structure, component of the Sec protein translocase complex. Heterotrimer consisting of SecY, SecE and SecG subunits. The heterotrimers can form oligomers, although 1 heterotrimer is thought to be able to translocate proteins. Interacts with SecDF, and other proteins may be involved. The channel interacts with SecA via subunit SecY.

Its subcellular location is the cell inner membrane. Its function is as follows. Essential subunit of the protein translocation channel SecYEG. Clamps together the 2 halves of SecY. May contact the channel plug during translocation. The protein is Protein translocase subunit SecE of Aquifex aeolicus (strain VF5).